Reading from the N-terminus, the 64-residue chain is Large ribosomal subunit protein bL35 (64 aa).

Basic residues predominate over residues 1–17 (MKQKTHSGIKKRIKKTG). The tract at residues 1–64 (MKQKTHSGIK…KRVNRLLGEG (64 aa)) is disordered. Residues 21 to 33 (LRREQANRRHLLE) show a composition bias toward basic and acidic residues.

It belongs to the bacterial ribosomal protein bL35 family.

The sequence is that of Large ribosomal subunit protein bL35 from Corynebacterium kroppenstedtii (strain DSM 44385 / JCM 11950 / CIP 105744 / CCUG 35717).